Consider the following 75-residue polypeptide: DNA-directed RNA polymerase subunit omega (75 aa).

Belongs to the RNA polymerase subunit omega family. In cyanobacteria the RNAP catalytic core is composed of 2 alpha, 1 beta, 1 beta', 1 gamma and 1 omega subunit. When a sigma factor is associated with the core the holoenzyme is formed, which can initiate transcription.

It carries out the reaction RNA(n) + a ribonucleoside 5'-triphosphate = RNA(n+1) + diphosphate. Promotes RNA polymerase assembly. Latches the N- and C-terminal regions of the beta' subunit thereby facilitating its interaction with the beta and alpha subunits. The sequence is that of DNA-directed RNA polymerase subunit omega from Picosynechococcus sp. (strain ATCC 27264 / PCC 7002 / PR-6) (Agmenellum quadruplicatum).